We begin with the raw amino-acid sequence, 132 residues long: U-scoloptoxin(05)-Er3a (132 aa).

The signal sequence occupies residues 1-19 (MRSWFVFVALLAVVFLPSS).

It belongs to the scoloptoxin-05 family. In terms of processing, contains 5 disulfide bonds. In terms of tissue distribution, expressed by the venom gland.

It is found in the secreted. The sequence is that of U-scoloptoxin(05)-Er3a from Ethmostigmus rubripes (Giant centipede).